A 250-amino-acid chain; its full sequence is Triosephosphate isomerase (250 aa).

9-11 (NWK) lines the substrate pocket. Residue histidine 95 is the Electrophile of the active site. Glutamate 167 functions as the Proton acceptor in the catalytic mechanism. Residues glycine 173, serine 212, and 233-234 (GG) each bind substrate.

Belongs to the triosephosphate isomerase family. As to quaternary structure, homodimer.

The protein resides in the cytoplasm. It carries out the reaction D-glyceraldehyde 3-phosphate = dihydroxyacetone phosphate. The protein operates within carbohydrate biosynthesis; gluconeogenesis. Its pathway is carbohydrate degradation; glycolysis; D-glyceraldehyde 3-phosphate from glycerone phosphate: step 1/1. Functionally, involved in the gluconeogenesis. Catalyzes stereospecifically the conversion of dihydroxyacetone phosphate (DHAP) to D-glyceraldehyde-3-phosphate (G3P). The chain is Triosephosphate isomerase from Psychromonas ingrahamii (strain DSM 17664 / CCUG 51855 / 37).